Here is a 476-residue protein sequence, read N- to C-terminus: Serine protease HTRA4 (476 aa).

Positions 1–31 (MIRPQLRTAGLGRCLLPGLLLLLVPVLWAGA) are cleaved as a signal peptide. Residues 36 to 109 (TQPSCPAVCQ…PGFPSTCGCP (74 aa)) enclose the IGFBP N-terminal domain. 8 disulfides stabilise this stretch: Cys-40/Cys-66, Cys-44/Cys-68, Cys-49/Cys-69, Cys-55/Cys-72, Cys-80/Cys-94, Cys-88/Cys-106, Cys-108/Cys-127, and Cys-116/Cys-152. A Kazal-like domain is found at 88–154 (CAPGLQCLQP…VPVQWGNCGD (67 aa)). Residues 202-362 (GSGFIVSEDG…IPSDRVRQFL (161 aa)) form a serine protease region. Catalysis depends on charge relay system residues His-218, Asp-248, and Ser-326. The PDZ domain maps to 383–474 (LQMLSLTVPL…NLLLTVIPET (92 aa)).

It belongs to the peptidase S1C family.

The protein localises to the secreted. Its function is as follows. Serine protease. In Homo sapiens (Human), this protein is Serine protease HTRA4 (HTRA4).